The chain runs to 212 residues: ER lumen protein-retaining receptor (212 aa).

Topologically, residues 1–2 (MN) are lumenal. A helical membrane pass occupies residues 3–21 (IFRFAGDLSHVFAIIILLL). Residues 22–35 (KIWKTRSCAGISGK) lie on the Cytoplasmic side of the membrane. Residues 36–53 (SQILFAVVYLTRYLDLFT) form a helical membrane-spanning segment. Over 54–61 (TYVSLYNS) the chain is Lumenal. The chain crosses the membrane as a helical span at residues 62–80 (VMKVLFLATSGATVYLMYV). Over 81 to 96 (KFKATYDHNHDSFRIE) the chain is Cytoplasmic. A helical membrane pass occupies residues 97-110 (FLLVPCALLSLVIN). The Lumenal portion of the chain corresponds to 111–117 (HEFTVME). A helical membrane pass occupies residues 118–137 (VLWTFSIYLESVAILPQLFL). Over 138–149 (VSRTGEAESITS) the chain is Cytoplasmic. A helical membrane pass occupies residues 150 to 168 (HYLFALGSYRALYLLNWVY). The Lumenal segment spans residues 169 to 178 (RYMVESHYDL). Residues 179-199 (IAIFAGVVQTVLYCDFFYLYI) form a helical membrane-spanning segment. The Cytoplasmic segment spans residues 200 to 212 (TKVLKGKKLQLPA).

The protein belongs to the ERD2 family.

It is found in the endoplasmic reticulum membrane. Required for the retention of luminal endoplasmic reticulum proteins. Determines the specificity of the luminal ER protein retention system. Also required for normal vesicular traffic through the Golgi. This is ER lumen protein-retaining receptor (KdelR) from Drosophila melanogaster (Fruit fly).